Consider the following 366-residue polypeptide: Alanine racemase (366 aa).

The active-site Proton acceptor; specific for D-alanine is the lysine 40. An N6-(pyridoxal phosphate)lysine modification is found at lysine 40. A substrate-binding site is contributed by arginine 136. The Proton acceptor; specific for L-alanine role is filled by tyrosine 263. Methionine 310 is a substrate binding site.

This sequence belongs to the alanine racemase family. Pyridoxal 5'-phosphate is required as a cofactor.

The catalysed reaction is L-alanine = D-alanine. The protein operates within amino-acid biosynthesis; D-alanine biosynthesis; D-alanine from L-alanine: step 1/1. Its function is as follows. Catalyzes the interconversion of L-alanine and D-alanine. May also act on other amino acids. The chain is Alanine racemase (alr) from Streptococcus equi subsp. equi (strain 4047).